Here is a 37-residue protein sequence, read N- to C-terminus: Large ribosomal subunit protein bL36 (37 aa).

This sequence belongs to the bacterial ribosomal protein bL36 family.

The polypeptide is Large ribosomal subunit protein bL36 (Campylobacter jejuni subsp. jejuni serotype O:6 (strain 81116 / NCTC 11828)).